The following is a 387-amino-acid chain: S-adenosylmethionine synthase (387 aa).

H16 provides a ligand contact to ATP. Mg(2+) is bound at residue D18. E44 lines the K(+) pocket. E57 and Q100 together coordinate L-methionine. Residues 100–110 (QSPDIAQGVDR) form a flexible loop region. ATP contacts are provided by residues 167–169 (DAK), 232–233 (RF), D241, 247–248 (RK), A264, and K268. D241 is a binding site for L-methionine. Residue K272 participates in L-methionine binding.

Belongs to the AdoMet synthase family. As to quaternary structure, homotetramer; dimer of dimers. Mg(2+) is required as a cofactor. Requires K(+) as cofactor.

Its subcellular location is the cytoplasm. It carries out the reaction L-methionine + ATP + H2O = S-adenosyl-L-methionine + phosphate + diphosphate. It functions in the pathway amino-acid biosynthesis; S-adenosyl-L-methionine biosynthesis; S-adenosyl-L-methionine from L-methionine: step 1/1. In terms of biological role, catalyzes the formation of S-adenosylmethionine (AdoMet) from methionine and ATP. The overall synthetic reaction is composed of two sequential steps, AdoMet formation and the subsequent tripolyphosphate hydrolysis which occurs prior to release of AdoMet from the enzyme. The protein is S-adenosylmethionine synthase of Cupriavidus pinatubonensis (strain JMP 134 / LMG 1197) (Cupriavidus necator (strain JMP 134)).